Reading from the N-terminus, the 593-residue chain is Regulatory protein NPR1 (593 aa).

Residues Ser-11, Ser-15, Ser-55, and Ser-59 each carry the phosphoserine modification. Positions 65-144 constitute a BTB domain; that stretch reads SDAKLVLSDG…VYSSRVRPPP (80 aa). The C2HC NPR-type zinc-finger motif lies at 147–161; that stretch reads VSECADENCCHVACR. The Zn(2+) site is built by Cys-150 and Cys-155. The residue at position 156 (Cys-156) is an S-nitrosocysteine. His-157 and Cys-160 together coordinate Zn(2+). ANK repeat units lie at residues 229 to 258, 265 to 295, 297 to 324, 328 to 357, and 361 to 397; these read KSNV…ELGL, KHVS…NLDD, CALH…DVNH, RGYT…SASE, and EGRT…CVEI. The short motif at 345–348 is the SIM3, required fo binding to SUMO3 and subsequent sumoylation element; the sequence is ILSL. Positions 387–525 are salicylic acid-binding core (SBC); the sequence is HSLKGRLCVE…DQIMNCEDLT (139 aa). Arg-432 provides a ligand contact to salicylate. Positions 537-554 match the Nuclear localization signal motif; sequence KRLQKKQRYMEIQETLKK. Residues 563–593 are disordered; that stretch reads LGNSSLTDSTSSTSKSTGGKRSNRKLSHRRR. Over residues 566-579 the composition is skewed to low complexity; that stretch reads SSLTDSTSSTSKST. Over residues 583-593 the composition is skewed to basic residues; it reads RSNRKLSHRRR.

Belongs to the plant 'ANKYRIN-BTB/POZ' family. 'NPR1-like' subfamily. As to quaternary structure, homodimer. Oligomer of dimers in an uninduced quiescent state; disulfide-linked. Forms activated (i.e. sumoylated) homodimers and monomers upon systemic acquired resistance (SAR) induction. Interacts with TGA1, TGA3, TGA4, TGA5, TGA6, TGA7 and with reduced forms of TGA1 and TGA4. Activated homodimer binds two TGA3 dimers in the presence of DNA via its ANK 2 repeat (265-295), thus forming a TGA3(2)-NPR1(2)-TGA3(2) complex in which NPR1 serves as a transcription cofactor by bridging two transcription factor complexes in an enhanceosome. Interacts with NIMIN-1 and NIMIN-3 via its C-terminal region, and with NIMIN-2 via its N-terminal region. Interacts with SUMO3 but not with SUMO1 and SUMO2; this interaction is required for phosphorylation at Ser-11 and Ser-15, and triggers activation by sumoylation and subsequent degradation. Binds to NPR3 and NPR4; these interactions are promoted by association of salicylic acid (SA) with NPR3, but disrupted by SA association with NPR4, probably due to conformational changes. Binds to CUL3A, a core component of the cullin-RING ubiquitin ligases (CRL); this interaction requires NPR3 and NPR4. Interacts with NPR2 independently of SA. Binds to WRKY70 when unmodified (i.e. not sumoylated). Post-translationally, phosphorylation at Ser-55 and Ser-59 prevents sumoylation to ensure stability and quiescence. Phosphorylated at Ser-11 and Ser-15 in the nucleus; facilitates its recruitment to a cullin3-based ubiquitin ligase leading to polyubiquitination and subsequent CUL3/CSN-mediated degradation. This phosphorylation at Ser-11 and Ser-15 requires interaction with SUMO3, and promotes in turn activation by sumoylation and subsequent degradation. In terms of processing, ubiquitinated. Post-translationally, sumoylated by SUMO3 independently of an E3 ligase to activate defense gene expression by switching from association with WRKY transcriptional repressors (e.g. WRKY70) to TGA transcriptional activators (e.g. TGA3). Sumoylation is inhibited by phosphorylation at Ser-55 and Ser-59, but seems to promote phosphorylation at Ser-11 and Ser-15. Sumoylation also triggers degradation, making immune induction transient. The Cys-82-SH group reacts with Cys-216-SH of the other subunit to form an intermolecular disulfide. This disulfide might subsequently be reduced upon systemic acquired resistance (SAR) induction. In terms of processing, S-nitrosylation at Cys-156 facilitates its oligomerization.

The protein localises to the cytoplasm. The protein resides in the nucleus. It is found in the nuclear body. It participates in protein modification; protein ubiquitination. Its function is as follows. Salicylic acid (SA)-binding substrate-specific adapter of an E3 ubiquitin-protein ligase complex (CUL3-RBX1-BTB) which mediates the ubiquitination and subsequent proteasomal degradation of target proteins. Transcription cofactor that represses gene expression in the absence of salicylic acid (SA), when attached to negative cis-elements (W-box) with WRKY transcription factors (e.g. WRKY70), but stimulates gene expression upon activation by SA, when sumoylated and attached to positive cis-elements (as-1) with TGA transcription factors (e.g. TGA3), thus confering immunity through a series of gene regulations ending in a significant increase in antimicrobial and defense genes expression (e.g. PR-1 and PR-2). Binds to SA with low capacity; this leads to conformational changes. Key positive regulator of the SA-dependent signaling pathway that negatively regulates jasmonic acid (JA)-dependent signaling pathway. Controls the onset of systemic acquired resistance (SAR). Upon SAR induction, a biphasic change in cellular reduction potential occurs, resulting in reduction of the cytoplasmic oligomeric form to dimeric and monomeric forms, which accumulate in the nucleus and activate gene expression. Appears to control lesion expansion by acting as an inhibitor of programmed cell death (PCD) during effector-triggered immunity (ETI) that occurs in response to incompatible interaction with avirulent pathogenic bacteria (i.e. Pseudomonas syringae ES4326/avrRpt2) ending in a hypersensitive response (HR). Phosphorylated form is target of proteasome degradation. This chain is Regulatory protein NPR1, found in Arabidopsis thaliana (Mouse-ear cress).